The sequence spans 201 residues: MSAAARVLPKAVTFVTGNAKKLEEVRAILGSSIPFQSLKLDLPELQGEPEDISKEKARMAASQVNGPVLVEDTCLCFNALKGLPGPYIKWFLEKIGHEGLNNLLKAYEDKSAFAMCIFSLALGPGEEPITFVGKTAGKIVPARGPNDFGWDPVFQPDGFEQTYAEMPKSVKNEISHRGKALALVKEHFASASYTVQSDNSA.

Residue 16–21 (TGNAKK) participates in ITP binding. A Mg(2+)-binding site is contributed by Glu44. Residues Lys56, 72-73 (DT), Lys89, 148-151 (FGWD), Lys171, and 176-177 (HR) each bind ITP.

This sequence belongs to the HAM1 NTPase family. Homodimer. Mg(2+) is required as a cofactor. Requires Mn(2+) as cofactor.

The protein localises to the cytoplasm. The enzyme catalyses ITP + H2O = IMP + diphosphate + H(+). It catalyses the reaction dITP + H2O = dIMP + diphosphate + H(+). It carries out the reaction XTP + H2O = XMP + diphosphate + H(+). Its function is as follows. Pyrophosphatase that hydrolyzes non-canonical purine nucleotides such as inosine triphosphate (ITP), deoxyinosine triphosphate (dITP) or xanthosine 5'-triphosphate (XTP) to their respective monophosphate derivatives. The enzyme does not distinguish between the deoxy- and ribose forms. Probably excludes non-canonical purines from RNA and DNA precursor pools, thus preventing their incorporation into RNA and DNA and avoiding chromosomal lesions. The sequence is that of Inosine triphosphate pyrophosphatase from Sorghum bicolor (Sorghum).